Consider the following 87-residue polypeptide: Phosphocarrier protein HPr (87 aa).

In terms of domain architecture, HPr spans 1 to 87; it reads MASKDFHIVA…AETMTKEGLA (87 aa). His15 (pros-phosphohistidine intermediate) is an active-site residue. A Phosphoserine; by HPrK/P modification is found at Ser46.

This sequence belongs to the HPr family.

It localises to the cytoplasm. Its activity is regulated as follows. Phosphorylation on Ser-46 inhibits the phosphoryl transfer from enzyme I to HPr. Functionally, general (non sugar-specific) component of the phosphoenolpyruvate-dependent sugar phosphotransferase system (sugar PTS). This major carbohydrate active-transport system catalyzes the phosphorylation of incoming sugar substrates concomitantly with their translocation across the cell membrane. The phosphoryl group from phosphoenolpyruvate (PEP) is transferred to the phosphoryl carrier protein HPr by enzyme I. Phospho-HPr then transfers it to the PTS EIIA domain. In terms of biological role, P-Ser-HPr interacts with the catabolite control protein A (CcpA), forming a complex that binds to DNA at the catabolite response elements cre, operator sites preceding a large number of catabolite-regulated genes. Thus, P-Ser-HPr is a corepressor in carbon catabolite repression (CCR), a mechanism that allows bacteria to coordinate and optimize the utilization of available carbon sources. P-Ser-HPr also plays a role in inducer exclusion, in which it probably interacts with several non-PTS permeases and inhibits their transport activity. This chain is Phosphocarrier protein HPr (ptsH), found in Streptococcus salivarius.